The chain runs to 103 residues: NADH-quinone oxidoreductase subunit K 1 (103 aa).

Helical transmembrane passes span 7 to 27, 31 to 51, and 63 to 83; these read ISWFLTLSAILFALGVAGFLF, IITVFMSIELMLNAVNLSFVT, and LFTFFVMVVAAAEAAVGLAII.

Belongs to the complex I subunit 4L family. As to quaternary structure, NDH-1 is composed of 14 different subunits. Subunits NuoA, H, J, K, L, M, N constitute the membrane sector of the complex.

It is found in the cell inner membrane. The enzyme catalyses a quinone + NADH + 5 H(+)(in) = a quinol + NAD(+) + 4 H(+)(out). Its function is as follows. NDH-1 shuttles electrons from NADH, via FMN and iron-sulfur (Fe-S) centers, to quinones in the respiratory chain. The immediate electron acceptor for the enzyme in this species is believed to be ubiquinone. Couples the redox reaction to proton translocation (for every two electrons transferred, four hydrogen ions are translocated across the cytoplasmic membrane), and thus conserves the redox energy in a proton gradient. The sequence is that of NADH-quinone oxidoreductase subunit K 1 from Solibacter usitatus (strain Ellin6076).